The sequence spans 289 residues: ATP synthase gamma chain (289 aa).

This sequence belongs to the ATPase gamma chain family. In terms of assembly, F-type ATPases have 2 components, CF(1) - the catalytic core - and CF(0) - the membrane proton channel. CF(1) has five subunits: alpha(3), beta(3), gamma(1), delta(1), epsilon(1). CF(0) has three main subunits: a, b and c.

Its subcellular location is the cell inner membrane. Its function is as follows. Produces ATP from ADP in the presence of a proton gradient across the membrane. The gamma chain is believed to be important in regulating ATPase activity and the flow of protons through the CF(0) complex. This chain is ATP synthase gamma chain, found in Janthinobacterium sp. (strain Marseille) (Minibacterium massiliensis).